An 885-amino-acid chain; its full sequence is Chitobiase (885 aa).

The signal sequence occupies residues 1–27 (MNAFKLSALARLTATMGFLGGMGSAMA). 3 disulfides stabilise this stretch: cysteine 56–cysteine 66, cysteine 400–cysteine 408, and cysteine 505–cysteine 578. Glutamate 540 serves as the catalytic Proton donor. The tract at residues 866–885 (EVQVRSVSPDGKRYSRAEKV) is disordered. Over residues 875 to 885 (DGKRYSRAEKV) the composition is skewed to basic and acidic residues.

Belongs to the glycosyl hydrolase 20 family. In terms of assembly, monomer.

The protein localises to the periplasm. The enzyme catalyses Hydrolysis of terminal non-reducing N-acetyl-D-hexosamine residues in N-acetyl-beta-D-hexosaminides.. It functions in the pathway glycan degradation; chitin degradation. Functionally, digests the beta-1,4-glycosidic bonds in N-acetylglucosamine (GlcNAc) oligomers (mainly dimers). The sequence is that of Chitobiase (chb) from Serratia marcescens.